Consider the following 594-residue polypeptide: Bifunctional lycopene cyclase/phytoene synthase (594 aa).

The lycopene beta-cyclase stretch occupies residues 1-249 (MGLDYLMVHV…VVFGIAAMHN (249 aa)). Helical transmembrane passes span 3–23 (LDYL…LTIL), 35–55 (KIVL…SYLI), 77–97 (LEEV…YIIF), 130–150 (LGTL…YIGG), 153–173 (MYLG…WVLM), 176–196 (FLLA…TLYL), and 227–247 (IEEA…IAAM). The tract at residues 256–594 (YKAFISTTAM…RFKRAWLAML (339 aa)) is phytoene synthase.

It in the N-terminal section; belongs to the lycopene beta-cyclase family. The protein in the C-terminal section; belongs to the phytoene/squalene synthase family.

Its subcellular location is the membrane. The catalysed reaction is all-trans-lycopene = gamma-carotene. It carries out the reaction gamma-carotene = all-trans-beta-carotene. It catalyses the reaction 2 (2E,6E,10E)-geranylgeranyl diphosphate = 15-cis-phytoene + 2 diphosphate. It participates in carotenoid biosynthesis; beta-carotene biosynthesis. The protein operates within carotenoid biosynthesis; phytoene biosynthesis; all-trans-phytoene from geranylgeranyl diphosphate: step 1/1. Its function is as follows. Bifunctional enzyme that catalyzes the reactions from geranylgeranyl diphosphate to phytoene (phytoene synthase) and lycopene to beta-carotene via the intermediate gamma-carotene (lycopene cyclase). The polypeptide is Bifunctional lycopene cyclase/phytoene synthase (Arthroderma gypseum (strain ATCC MYA-4604 / CBS 118893) (Microsporum gypseum)).